We begin with the raw amino-acid sequence, 324 residues long: MTTKTGILLVNLGTPAAPTTAAVKAFLSQFLHDQRVVDLPRYLWCPLLHFIILPTRSPKVAKLYQQVWTEQGSPLMVISKQQRAALEQELKREGVEVPVELAMTYGSPSLDEGWQALKAKGVNRVILLPLYPQYSVSTTASVFDGWAKAMKKERNLPVVRLIRDYHAHPEYIQALAMSVRRHWEQHGQGEHLLMSFHGIPERYEREGDPYGHQCRRTAALLAEVLGLEASQWTASFQSRFGKEEWLKPYTDVTIAGLPATGIKRLDVICPAFAADCLETLEEIQVQNREIFMAAGGEQFEYIPALNSDQAHIRMMVSLICRELA.

Residues H197 and E278 each contribute to the Fe cation site.

It belongs to the ferrochelatase family.

The protein resides in the cytoplasm. The catalysed reaction is heme b + 2 H(+) = protoporphyrin IX + Fe(2+). Its pathway is porphyrin-containing compound metabolism; protoheme biosynthesis; protoheme from protoporphyrin-IX: step 1/1. Catalyzes the ferrous insertion into protoporphyrin IX. This is Ferrochelatase from Aeromonas hydrophila subsp. hydrophila (strain ATCC 7966 / DSM 30187 / BCRC 13018 / CCUG 14551 / JCM 1027 / KCTC 2358 / NCIMB 9240 / NCTC 8049).